A 275-amino-acid polypeptide reads, in one-letter code: Putative phosphoenolpyruvate synthase regulatory protein (275 aa).

153 to 160 contacts ADP; it reads GVSRSGKT.

The protein belongs to the pyruvate, phosphate/water dikinase regulatory protein family. PSRP subfamily.

The catalysed reaction is [pyruvate, water dikinase] + ADP = [pyruvate, water dikinase]-phosphate + AMP + H(+). It carries out the reaction [pyruvate, water dikinase]-phosphate + phosphate + H(+) = [pyruvate, water dikinase] + diphosphate. Its function is as follows. Bifunctional serine/threonine kinase and phosphorylase involved in the regulation of the phosphoenolpyruvate synthase (PEPS) by catalyzing its phosphorylation/dephosphorylation. This chain is Putative phosphoenolpyruvate synthase regulatory protein, found in Nitrosomonas eutropha (strain DSM 101675 / C91 / Nm57).